Reading from the N-terminus, the 141-residue chain is Large ribosomal subunit protein uL11 (141 aa).

It belongs to the universal ribosomal protein uL11 family. As to quaternary structure, part of the ribosomal stalk of the 50S ribosomal subunit. Interacts with L10 and the large rRNA to form the base of the stalk. L10 forms an elongated spine to which L12 dimers bind in a sequential fashion forming a multimeric L10(L12)X complex. In terms of processing, one or more lysine residues are methylated.

Its function is as follows. Forms part of the ribosomal stalk which helps the ribosome interact with GTP-bound translation factors. The protein is Large ribosomal subunit protein uL11 of Maridesulfovibrio salexigens (strain ATCC 14822 / DSM 2638 / NCIMB 8403 / VKM B-1763) (Desulfovibrio salexigens).